We begin with the raw amino-acid sequence, 169 residues long: MPLLDSFTVDHTRMNAPAVRVAKHMSTPKGDAITVFDLRFCTPNKEILSERGIHTLEHLFAGFMRDHLNSSNVEIIDISPMGCRTGFYMSLIGEPTEHQVAVAWLAAMEDVLKVVEQSEIPELNEYQCGTYEMHSLEQAQEIARNIIAAGVSVNRNDDLKLSDEILGKL.

Positions 54, 58, and 128 each coordinate Fe cation.

Belongs to the LuxS family. Homodimer. Requires Fe cation as cofactor.

It catalyses the reaction S-(5-deoxy-D-ribos-5-yl)-L-homocysteine = (S)-4,5-dihydroxypentane-2,3-dione + L-homocysteine. Functionally, involved in the synthesis of autoinducer 2 (AI-2) which is secreted by bacteria and is used to communicate both the cell density and the metabolic potential of the environment. The regulation of gene expression in response to changes in cell density is called quorum sensing. Catalyzes the transformation of S-ribosylhomocysteine (RHC) to homocysteine (HC) and 4,5-dihydroxy-2,3-pentadione (DPD). The chain is S-ribosylhomocysteine lyase from Shewanella putrefaciens (strain CN-32 / ATCC BAA-453).